The primary structure comprises 127 residues: Small ribosomal subunit protein uS13 (127 aa).

Residues 93 to 127 (RRSLPVRGQRTHTNARTRKGPRRGTVAGKKKATKT) form a disordered region.

Belongs to the universal ribosomal protein uS13 family. In terms of assembly, part of the 30S ribosomal subunit. Forms a loose heterodimer with protein S19. Forms two bridges to the 50S subunit in the 70S ribosome.

Functionally, located at the top of the head of the 30S subunit, it contacts several helices of the 16S rRNA. In the 70S ribosome it contacts the 23S rRNA (bridge B1a) and protein L5 of the 50S subunit (bridge B1b), connecting the 2 subunits; these bridges are implicated in subunit movement. Contacts the tRNAs in the A and P-sites. The chain is Small ribosomal subunit protein uS13 from Acidobacterium capsulatum (strain ATCC 51196 / DSM 11244 / BCRC 80197 / JCM 7670 / NBRC 15755 / NCIMB 13165 / 161).